A 234-amino-acid chain; its full sequence is uncharacterized protein (234 aa).

The interval 65-89 (QNANRQEGRRRGLRPSSDGNLRREN) is disordered. The segment at 185–220 (CAVCLHNKVCVLFQKCKHVITCGPCSLRIKECPVCK) adopts an RING-type zinc-finger fold.

The protein belongs to the IIV-6 175R/332L family.

This is an uncharacterized protein from Acheta domesticus (House cricket).